The following is a 456-amino-acid chain: SWI/SNF complex component SNF12 homolog (456 aa).

Residues 234–310 (HVPQKYKVLG…PQLLREHLSP (77 aa)) form the SWIB/MDM2 domain. Residues 435–456 (KQTTPNPTPQQISMAPSTPQTP) form a disordered region.

The protein belongs to the SMARCD family. As to quaternary structure, part of a SWI-SNF complex.

The protein localises to the nucleus. Functionally, involved in transcriptional activation and repression of select genes by chromatin remodeling (alteration of DNA-nucleosome topology). In Dictyostelium discoideum (Social amoeba), this protein is SWI/SNF complex component SNF12 homolog (snf12-1).